A 199-amino-acid polypeptide reads, in one-letter code: Recombination protein RecR (199 aa).

The C4-type zinc-finger motif lies at 56 to 71; sequence CSICFNWSAEDPCEIC. Residues 79 to 174 enclose the Toprim domain; the sequence is SLWCVVADVK…TLRMTRLAFG (96 aa).

The protein belongs to the RecR family.

Functionally, may play a role in DNA repair. It seems to be involved in an RecBC-independent recombinational process of DNA repair. It may act with RecF and RecO. This Synechococcus sp. (strain JA-2-3B'a(2-13)) (Cyanobacteria bacterium Yellowstone B-Prime) protein is Recombination protein RecR.